A 421-amino-acid polypeptide reads, in one-letter code: 3-alpha-mycarosylerythronolide B desosaminyl transferase (421 aa).

Residues 1–23 (MRVVFSSMASKSHLFGLVPLAWA) form the signal peptide.

Belongs to the glycosyltransferase 28 family. As to quaternary structure, heterotetramer composed of EryCII and EryCIII.

The catalysed reaction is 3-O-alpha-L-mycarosylerythronolide B + dTDP-alpha-D-desosamine = erythromycin D + dTDP + H(+). It participates in antibiotic biosynthesis; erythromycin biosynthesis. In terms of biological role, catalyzes the conversion of alpha-L-mycarosylerythronolide B into erythromycin D in the erythromycin biosynthesis pathway. The polypeptide is 3-alpha-mycarosylerythronolide B desosaminyl transferase (eryCIII) (Saccharopolyspora erythraea (strain ATCC 11635 / DSM 40517 / JCM 4748 / NBRC 13426 / NCIMB 8594 / NRRL 2338)).